We begin with the raw amino-acid sequence, 165 residues long: Protein eva-1 homolog B (165 aa).

The chain crosses the membrane as a helical span at residues 29 to 49 (GLYFVLGVCFGLLLTLCLLVI). Disordered stretches follow at residues 57–109 (PRPR…GPLN) and 143–165 (LLGT…MHYY). Over residues 74–84 (EPEDDDEDEED) the composition is skewed to acidic residues. Phosphothreonine occurs at positions 85, 148, and 158.

Belongs to the EVA1 family.

The protein resides in the membrane. In Homo sapiens (Human), this protein is Protein eva-1 homolog B (EVA1B).